A 116-amino-acid polypeptide reads, in one-letter code: Non-specific lipid-transfer protein (116 aa).

A signal peptide spans 1–25 (MASMVMNVLCVAVACMVFSASYADA). 4 disulfides stabilise this stretch: Cys28–Cys75, Cys38–Cys52, Cys53–Cys98, and Cys73–Cys112.

It belongs to the plant LTP family.

Plant non-specific lipid-transfer proteins transfer phospholipids as well as galactolipids across membranes. May play a role in wax or cutin deposition in the cell walls of expanding epidermal cells and certain secretory tissues. This Gerbera hybrida (Daisy) protein is Non-specific lipid-transfer protein.